We begin with the raw amino-acid sequence, 226 residues long: UPF0173 metal-dependent hydrolase Tpet_1587 (226 aa).

The protein belongs to the UPF0173 family.

This is UPF0173 metal-dependent hydrolase Tpet_1587 from Thermotoga petrophila (strain ATCC BAA-488 / DSM 13995 / JCM 10881 / RKU-1).